The primary structure comprises 151 residues: Acidic phospholipase A2 1 (151 aa).

The N-terminal stretch at 1-27 (MYPAHLLVLLAVCVSLLGAASIPARPL) is a signal peptide. Intrachain disulfides connect C38/C104, C54/C151, C56/C72, C71/C132, C78/C125, C88/C118, and C111/C123. Ca(2+) contacts are provided by Y55, G57, and G59. H75 is an active-site residue. D76 is a Ca(2+) binding site. D126 is a catalytic residue.

This sequence belongs to the phospholipase A2 family. Group I subfamily. D49 sub-subfamily. Ca(2+) serves as cofactor. Expressed by the venom gland.

It is found in the secreted. The enzyme catalyses a 1,2-diacyl-sn-glycero-3-phosphocholine + H2O = a 1-acyl-sn-glycero-3-phosphocholine + a fatty acid + H(+). Its function is as follows. PLA2 catalyzes the calcium-dependent hydrolysis of the 2-acyl groups in 3-sn-phosphoglycerides. In Tropidechis carinatus (Australian rough-scaled snake), this protein is Acidic phospholipase A2 1.